Consider the following 94-residue polypeptide: Putative defensin-like protein 88 (94 aa).

The N-terminal stretch at 1-26 (MATQKFSYFLLVLLMVFALILPSIIS) is a signal peptide. 3 cysteine pairs are disulfide-bonded: Cys-32-Cys-72, Cys-38-Cys-59, and Cys-48-Cys-71.

This sequence belongs to the DEFL family.

It localises to the secreted. The polypeptide is Putative defensin-like protein 88 (Arabidopsis thaliana (Mouse-ear cress)).